Reading from the N-terminus, the 856-residue chain is Leucine--tRNA ligase (856 aa).

The 'HIGH' region signature appears at 42–52 (PYPSGNLHMGH). Positions 617 to 621 (KMSKS) match the 'KMSKS' region motif. Lys620 contributes to the ATP binding site.

It belongs to the class-I aminoacyl-tRNA synthetase family.

It localises to the cytoplasm. It carries out the reaction tRNA(Leu) + L-leucine + ATP = L-leucyl-tRNA(Leu) + AMP + diphosphate. This is Leucine--tRNA ligase from Rippkaea orientalis (strain PCC 8801 / RF-1) (Cyanothece sp. (strain PCC 8801)).